A 140-amino-acid chain; its full sequence is MYSQQRIFNSKYFIFFIAVLSIFWLPTMSARNLENSKNENGISGSNSGNGKMNSQYNTGSPSAYYSAKHNLRSMLMAPKDYQQKLHAKIPLNLDLMDFLLEYEDEDRSKRFDDYGHMRFGKRGGEEQFDDYGHMRFGRSI.

Residues 1–30 (MYSQQRIFNSKYFIFFIAVLSIFWLPTMSA) form the signal peptide. Positions 31–109 (RNLENSKNEN…LEYEDEDRSK (79 aa)) are excised as a propeptide. A Sulfotyrosine modification is found at Tyr114. Phe119 carries the phenylalanine amide modification. Sulfotyrosine is present on Tyr131. Phe136 is subject to Phenylalanine amide. A propeptide spanning residues 139–140 (SI) is cleaved from the precursor.

It belongs to the gastrin/cholecystokinin family. In terms of tissue distribution, in brain, it is specifically expressed in four pairs of neurons. Not expressed in other cells of the brain and in the thoracico-abdominal ganglion.

The protein localises to the secreted. Functionally, callisulfakinin I is a neuropeptide. The existence of Callisulfakinin II is uncertain. In Calliphora vomitoria (Blue bottle fly), this protein is Callisulfakinin.